A 206-amino-acid polypeptide reads, in one-letter code: Ras-related protein Rab-18 (206 aa).

Residues Ser-17, Gly-20, Lys-21, Ser-22, Ser-23, Asp-34, Pro-35, Thr-40, Gly-66, Lys-123, Asp-125, and Ala-152 each coordinate GTP. Ser-22 contacts Mg(2+). 2 consecutive short sequence motifs (switch) follow at residues 31–45 (DTFD…GVDF) and 63–80 (DTAG…YYRG). Position 40 (Thr-40) interacts with Mg(2+). The S-palmitoyl cysteine moiety is linked to residue Cys-199. The residue at position 203 (Cys-203) is a Cysteine methyl ester. Cys-203 carries the S-geranylgeranyl cysteine lipid modification. A propeptide spans 204–206 (SML) (removed in mature form).

Belongs to the small GTPase superfamily. Rab family. Requires Mg(2+) as cofactor.

Its subcellular location is the endoplasmic reticulum membrane. The protein localises to the golgi apparatus. It is found in the cis-Golgi network membrane. It localises to the lipid droplet. The protein resides in the apical cell membrane. It carries out the reaction GTP + H2O = GDP + phosphate + H(+). Regulated by guanine nucleotide exchange factors (GEFs) which promote the exchange of bound GDP for free GTP. Regulated by GTPase activating proteins (GAPs) which increase the GTP hydrolysis activity at the ER membrane. Inhibited by GDP dissociation inhibitors (GDIs) which prevent Rab-GDP dissociation. In terms of biological role, the small GTPases Rab are key regulators of intracellular membrane trafficking, from the formation of transport vesicles to their fusion with membranes. Rabs cycle between an inactive GDP-bound form and an active GTP-bound form that is able to recruit to membranes different sets of downstream effectors directly responsible for vesicle formation, movement, tethering and fusion. RAB18 is required for the localization of ZFYVE1 to lipid droplets and for its function in mediating the formation of endoplasmic reticulum-lipid droplets (ER-LD) contacts. Also required for maintaining endoplasmic reticulum structure. Plays a role in apical endocytosis/recycling. Plays a key role in eye and brain development and neurodegeneration. The polypeptide is Ras-related protein Rab-18 (RAB18) (Gallus gallus (Chicken)).